Consider the following 454-residue polypeptide: Sensor histidine kinase RppB (454 aa).

Over 1-13 (MNTRRLFARSRLQ) the chain is Periplasmic. A helical membrane pass occupies residues 14 to 34 (LAFWYALVMGGILTLLGLGVY). The Cytoplasmic segment spans residues 35–186 (RAIVQANWMA…LAAFDAENKR (152 aa)). Residues 187-207 (ILWILGLSFPIALGLVAFSSW) form a helical membrane-spanning segment. Topologically, residues 208 to 454 (GLAGLAMRPI…PIFSVPIVHS (247 aa)) are periplasmic. The 219-residue stretch at 230–448 (NAAHELRSPL…LFTIQLPIFS (219 aa)) folds into the Histidine kinase domain. H233 carries the post-translational modification Phosphohistidine; by autocatalysis.

It is found in the cell inner membrane. The catalysed reaction is ATP + protein L-histidine = ADP + protein N-phospho-L-histidine.. Its function is as follows. Member of two-component regulatory system RppA/RppB, involved in the establishment of the appropriate stoichiometry between the 2 photosystems. It senses changes in the plastoquinone (PQ) redox poise. Another group shows this two-component pair, renamed NrsR/NrsS, controls the nickel-dependent expression of the nrsBACD operon; they suggest the photosystem-related activities seen earlier are due to the expression of NrsS (RppB) in the absence of its natural substrate NrsR (RppA). The protein is Sensor histidine kinase RppB of Synechocystis sp. (strain ATCC 27184 / PCC 6803 / Kazusa).